The chain runs to 209 residues: Ribosomal RNA large subunit methyltransferase E (209 aa).

Positions 63, 65, 83, 99, and 124 each coordinate S-adenosyl-L-methionine. The active-site Proton acceptor is Lys164.

It belongs to the class I-like SAM-binding methyltransferase superfamily. RNA methyltransferase RlmE family.

The protein resides in the cytoplasm. It carries out the reaction uridine(2552) in 23S rRNA + S-adenosyl-L-methionine = 2'-O-methyluridine(2552) in 23S rRNA + S-adenosyl-L-homocysteine + H(+). In terms of biological role, specifically methylates the uridine in position 2552 of 23S rRNA at the 2'-O position of the ribose in the fully assembled 50S ribosomal subunit. The protein is Ribosomal RNA large subunit methyltransferase E of Shewanella baltica (strain OS223).